The following is a 56-amino-acid chain: Frontoxin I (56 aa).

Disulfide bonds link cysteine 3–cysteine 22, cysteine 17–cysteine 39, cysteine 41–cysteine 52, and cysteine 53–cysteine 56.

It belongs to the three-finger toxin family. Short-chain subfamily. Type I alpha-neurotoxin sub-subfamily. Expressed by the venom gland.

It localises to the secreted. Binds to muscle nicotinic acetylcholine receptor (nAChR) and inhibit acetylcholine from binding to the receptor, thereby impairing neuromuscular transmission. The chain is Frontoxin I from Micrurus frontalis (Coral snake).